The chain runs to 270 residues: Malonyl-[acyl-carrier protein] O-methyltransferase (270 aa).

It belongs to the methyltransferase superfamily.

It catalyses the reaction malonyl-[ACP] + S-adenosyl-L-methionine = malonyl-[ACP] methyl ester + S-adenosyl-L-homocysteine. Its pathway is cofactor biosynthesis; biotin biosynthesis. Converts the free carboxyl group of a malonyl-thioester to its methyl ester by transfer of a methyl group from S-adenosyl-L-methionine (SAM). It allows to synthesize pimeloyl-ACP via the fatty acid synthetic pathway. In Magnetococcus marinus (strain ATCC BAA-1437 / JCM 17883 / MC-1), this protein is Malonyl-[acyl-carrier protein] O-methyltransferase.